The following is an 868-amino-acid chain: V-set and immunoglobulin domain-containing protein 10-like (868 aa).

The signal sequence occupies residues 1–27 (MGLSWALLPFLLLAFRAELLALQPALG). Over residues 26–52 (LGSQPPSASSSHSMGSSRDFVSNVSSS) the composition is skewed to low complexity. Positions 26-82 (LGSQPPSASSSHSMGSSRDFVSNVSSSQHPQPPGSEASAGIPDSNRFPQGLNSSHVP) are disordered. Topologically, residues 28–763 (SQPPSASSSH…QAGSDLSPGA (736 aa)) are extracellular. Residues N48, N77, and N88 are each glycosylated (N-linked (GlcNAc...) asparagine). Residues 71–80 (RFPQGLNSSH) are compositionally biased toward polar residues. Disordered regions lie at residues 96-154 (LSPD…SGSK) and 323-342 (WSRD…EPPR). Composition is skewed to polar residues over residues 99-108 (DVTSSETPPS) and 133-143 (PASQISVQTPD). Ig-like C2-type domains are found at residues 289–381 (PQLS…ADVS) and 389–474 (PVIR…SVFN). The cysteines at positions 311 and 365 are disulfide-linked. A glycan (N-linked (GlcNAc...) asparagine) is linked at N410. C415 and C458 are disulfide-bonded. 3 N-linked (GlcNAc...) asparagine glycosylation sites follow: N474, N628, and N637. Residues 764–784 (IAGIVLGSLLGLALLAGLLIL) traverse the membrane as a helical segment. The Cytoplasmic segment spans residues 785 to 868 (CICCLRRYPG…PWTVRAATQV (84 aa)).

It is found in the membrane. The protein is V-set and immunoglobulin domain-containing protein 10-like (Vsig10l) of Mus musculus (Mouse).